A 141-amino-acid chain; its full sequence is Probable mobile endonuclease E (141 aa).

The segment at lysine 115 to glycine 141 is disordered. Over residues arginine 122–glycine 141 the composition is skewed to polar residues.

This Escherichia coli (Bacteriophage T4) protein is Probable mobile endonuclease E (mobE).